The chain runs to 338 residues: Tetraacyldisaccharide 4'-kinase (338 aa).

61 to 68 (TLGGTGKT) provides a ligand contact to ATP.

The protein belongs to the LpxK family.

It catalyses the reaction a lipid A disaccharide + ATP = a lipid IVA + ADP + H(+). The protein operates within glycolipid biosynthesis; lipid IV(A) biosynthesis; lipid IV(A) from (3R)-3-hydroxytetradecanoyl-[acyl-carrier-protein] and UDP-N-acetyl-alpha-D-glucosamine: step 6/6. Functionally, transfers the gamma-phosphate of ATP to the 4'-position of a tetraacyldisaccharide 1-phosphate intermediate (termed DS-1-P) to form tetraacyldisaccharide 1,4'-bis-phosphate (lipid IVA). This chain is Tetraacyldisaccharide 4'-kinase, found in Nitrosococcus oceani (strain ATCC 19707 / BCRC 17464 / JCM 30415 / NCIMB 11848 / C-107).